The sequence spans 397 residues: B3 domain-containing protein At4g34400 (397 aa).

Positions 14 to 107 form a DNA-binding region, TF-B3; that stretch reads PRFFTVFVSH…IFEVSIFRGY (94 aa). Positions 118 to 255 are disordered; the sequence is ELEEEEEDSV…SSYAPDKEDT (138 aa). Residues 137–160 are compositionally biased toward basic and acidic residues; that stretch reads TGAKSEMKNTVPEGRDKGKSKVEV. Composition is skewed to acidic residues over residues 161–186, 212–227, and 235–246; these read VEDSDDDEEEDSVYSESSEETETDTD, SSDDEEDEEEDSDSDY, and DIEENSISEEDS.

It localises to the nucleus. The polypeptide is B3 domain-containing protein At4g34400 (Arabidopsis thaliana (Mouse-ear cress)).